The primary structure comprises 170 residues: Envelope protein 168 (170 aa).

Residue Met1 is a topological domain, intravirion. Residues 2 to 22 traverse the membrane as a helical segment; the sequence is FYPVVQILIGIILVIILILGF. Residues 23–170 lie on the Virion surface side of the membrane; the sequence is YHLKRKPPKK…TVMGIARNVL (148 aa).

The protein belongs to the asfivirus envelope protein p22 family.

It localises to the virion membrane. Its subcellular location is the host cell membrane. This African swine fever virus (isolate Tick/South Africa/Pretoriuskop Pr4/1996) (ASFV) protein is Envelope protein 168.